The primary structure comprises 474 residues: PTS system N-acetylmuramic acid-specific EIIBC component (474 aa).

One can recognise a PTS EIIB type-1 domain in the interval 1–89 (MAKEISSELL…SELLGEAPVQ (89 aa)). The Cytoplasmic portion of the chain corresponds to 1-123 (MAKEISSELL…LAKFATIFTP (123 aa)). The Phosphocysteine intermediate; for EIIB activity role is filled by cysteine 29. Residues 115 to 474 (AKFATIFTPL…LFGCRNVNLD (360 aa)) enclose the PTS EIIC type-1 domain. The helical transmembrane segment at 124–144 (LIPGFIAAGLLLGIATLIATV) threads the bilayer. Residues 145–157 (MHVPADAQGTLPD) are Periplasmic-facing. A helical transmembrane segment spans residues 158–178 (ALNFMKVFSKGLFTFLVILVG). Topologically, residues 179–180 (YN) are cytoplasmic. Residues 181–201 (AAQAFGGTGVNGAIIAALFLL) traverse the membrane as a helical segment. At 202–217 (GYNPAATTGYYAGFHD) the chain is on the periplasmic side. The helical transmembrane segment at 218-238 (FFGLPIDPRGNIIGVLIAAWA) threads the bilayer. Residues 239-260 (CARIEGMVRRFMPDDLDMLLTS) lie on the Cytoplasmic side of the membrane. A helical membrane pass occupies residues 261 to 281 (LITLLITATLAYLIIMPLGGW). Topologically, residues 282-301 (LFEGMSWLFMHLNSNPLGCA) are periplasmic. Residues 302 to 322 (VLAGLFLIAVVFGVHQGFIPV) traverse the membrane as a helical segment. Topologically, residues 323 to 334 (YLALMDSQGFNS) are cytoplasmic. A helical membrane pass occupies residues 335–355 (LFPILSMAGAGQVGAALALYW). At 356–368 (RAQPHSALRSQVR) the chain is on the periplasmic side. A helical membrane pass occupies residues 369 to 389 (GAIIPGLLGVGEPLIYGVTLP). Topologically, residues 390 to 393 (RMKP) are cytoplasmic. Residues 394–414 (FITACLGGAAGGLFIGLIAWW) traverse the membrane as a helical segment. At 415–440 (GLPMGLNSAFGPSGLVALPLMTSAQG) the chain is on the periplasmic side. The helical transmembrane segment at 441-461 (ILPAMAVYAGGILVAWVCGFI) threads the bilayer. The Cytoplasmic portion of the chain corresponds to 462-474 (FTTLFGCRNVNLD).

The protein resides in the cell inner membrane. It carries out the reaction N-acetyl-beta-D-muramate(out) + N(pros)-phospho-L-histidyl-[protein] = N-acetyl-beta-D-muramate 6-phosphate(in) + L-histidyl-[protein]. The phosphoenolpyruvate-dependent sugar phosphotransferase system (sugar PTS), a major carbohydrate active transport system, catalyzes the phosphorylation of incoming sugar substrates concomitantly with their translocation across the cell membrane. This system is involved in N-acetylmuramic acid (MurNAc) transport, yielding cytoplasmic MurNAc-6-P. Is also able to take up anhydro-N-acetylmuramic acid (anhMurNAc), but cannot phosphorylate the carbon 6, probably because of the 1,6-anhydro ring. In Escherichia coli O157:H7, this protein is PTS system N-acetylmuramic acid-specific EIIBC component (murP).